The primary structure comprises 454 residues: UDP-N-acetylmuramate--L-alanine ligase (454 aa).

112–118 (GTHGKTT) is an ATP binding site.

The protein belongs to the MurCDEF family.

The protein localises to the cytoplasm. The enzyme catalyses UDP-N-acetyl-alpha-D-muramate + L-alanine + ATP = UDP-N-acetyl-alpha-D-muramoyl-L-alanine + ADP + phosphate + H(+). It participates in cell wall biogenesis; peptidoglycan biosynthesis. Functionally, cell wall formation. This is UDP-N-acetylmuramate--L-alanine ligase from Nitratidesulfovibrio vulgaris (strain ATCC 29579 / DSM 644 / CCUG 34227 / NCIMB 8303 / VKM B-1760 / Hildenborough) (Desulfovibrio vulgaris).